The primary structure comprises 122 residues: Large ribosomal subunit protein uL14 (122 aa).

It belongs to the universal ribosomal protein uL14 family. Part of the 50S ribosomal subunit. Forms a cluster with proteins L3 and L19. In the 70S ribosome, L14 and L19 interact and together make contacts with the 16S rRNA in bridges B5 and B8.

Its function is as follows. Binds to 23S rRNA. Forms part of two intersubunit bridges in the 70S ribosome. The chain is Large ribosomal subunit protein uL14 from Shewanella woodyi (strain ATCC 51908 / MS32).